The chain runs to 938 residues: Auxilin (938 aa).

Residues 19 to 41 (AAAGENRMKDSENKGASSPDMEP) are disordered. 3 consecutive repeat copies span residues 61 to 64 (NLKD), 65 to 68 (NLKD), and 69 to 72 (TLKD). Residues 61–72 (NLKDNLKDTLKD) form a 3 X 4 AA approximate tandem repeats region. Residues 80–247 (SVSSYTKGDL…GYMCDLLADK (168 aa)) enclose the Phosphatase tensin-type domain. A Phosphoserine modification is found at Ser-137. Cys-189 serves as the catalytic Phosphocysteine intermediate. Residues 253-391 (FKPLTIKAIT…FQVTLDIEVQ (139 aa)) enclose the C2 tensin-type domain. The short motif at 434–442 (PADLPPDHP) is the SH3-binding element. The tract at residues 467-801 (EEDHAALVNQ…GKGSTNLEGK (335 aa)) is disordered. A phosphoserine mark is found at Ser-478 and Ser-481. A compositionally biased stretch (polar residues) spans 531–548 (DVSTNFSSLAAPPSNSEL). The span at 559–569 (TGPAQAGQAGV) shows a compositional bias: low complexity. Polar residues-rich tracts occupy residues 579–596 (VSAQ…SASP) and 624–654 (FLNT…TPAV). The residue at position 595 (Ser-595) is a Phosphoserine. Residues 679–694 (SAATSPTGSSHGTPTH) are compositionally biased toward low complexity. The span at 754-781 (NWQQTQSKPQSSMPHSSPQNRPNYNVSF) shows a compositional bias: polar residues. The J domain maps to 874-938 (TKWKPVGMAD…FENQGQKPLY (65 aa)).

Forms a complex composed of HSPA8, CLTC and DNAJC6. Interacts with HSPA8/HSC70 in an ATP-dependent manner; this interaction stimulates the HSPA8's ATPase activity. Interacts with CLTC; this interaction produces a local change in heavy-chain contacts, creating a detectable global distortion of the clathrin coat. Interacts with AP2A2. Interacts with DNM1(GTP-bound form); this interaction allows clathrin-coated vesicle (CCV) formation at the plasma membrane. The N-terminus is blocked. Post-translationally, phosphorylation at Ser-595 modulates its ability to bind CLTC and therefore the synaptic vesicle endocytosis (SVE).

It localises to the cytoplasmic vesicle. Its subcellular location is the clathrin-coated vesicle. Functionally, may act as a protein phosphatase and/or a lipid phosphatase. Co-chaperone that recruits HSPA8/HSC70 to clathrin-coated vesicles (CCVs) and promotes the ATP-dependent dissociation of clathrin from CCVs and participates in clathrin-mediated endocytosis of synaptic vesicles and their recycling and also in intracellular trafficking. Firstly, binds tightly to the clathrin cages, at a ratio of one DNAJC6 per clathrin triskelion. The HSPA8:ATP complex then binds to the clathrin-auxilin cage, initially at a ratio of one HSPA8 per triskelion leading to ATP hydrolysis stimulation and causing a conformational change in the HSPA8. This cycle is repeated three times to drive to a complex containing the clathrin-auxilin cage associated to three HSPA8:ADP complex. The ATP hydrolysis of the third HSPA8:ATP complex leads to a concerted dismantling of the cage into component triskelia. Then, dissociates from the released triskelia and be recycled to initiate another cycle of HSPA8's recruitment. Also acts during the early steps of clathrin-coated vesicle (CCV) formation through its interaction with the GTP bound form of DNM1. In Mus musculus (Mouse), this protein is Auxilin.